A 376-amino-acid polypeptide reads, in one-letter code: Glutamate 5-kinase (376 aa).

An ATP-binding site is contributed by Lys15. Ser55, Asp142, and Asn154 together coordinate substrate. ATP is bound by residues Thr174–Asp175 and Thr216–Lys222. The PUA domain maps to Ala281–Arg359.

Belongs to the glutamate 5-kinase family.

The protein localises to the cytoplasm. The enzyme catalyses L-glutamate + ATP = L-glutamyl 5-phosphate + ADP. The protein operates within amino-acid biosynthesis; L-proline biosynthesis; L-glutamate 5-semialdehyde from L-glutamate: step 1/2. Catalyzes the transfer of a phosphate group to glutamate to form L-glutamate 5-phosphate. The protein is Glutamate 5-kinase of Trichlorobacter lovleyi (strain ATCC BAA-1151 / DSM 17278 / SZ) (Geobacter lovleyi).